We begin with the raw amino-acid sequence, 748 residues long: Pleckstrin homology domain-containing family M member 3 (748 aa).

Disordered stretches follow at residues 88–107 (HAKE…PLLS) and 129–187 (NDSL…RNKN). 2 stretches are compositionally biased toward basic and acidic residues: residues 129-140 (NDSLDHLEDAPK) and 148-159 (SRSDVSHIDWKN). Residues 167-180 (QRSSSQGMHCTSPF) show a composition bias toward polar residues. PH domains are found at residues 200 to 297 (NILK…EAIC) and 348 to 443 (NIIK…SAAN). The Phorbol-ester/DAG-type zinc finger occupies 656 to 709 (SHVYSCSLCSQKGFICEICNNGEILYPFEENSTSRCENCGAVFHSDCKVRTVPC).

It localises to the cytoplasm. It is found in the golgi apparatus. The protein localises to the cell membrane. Functionally, may play a role during muscle differentiation. The sequence is that of Pleckstrin homology domain-containing family M member 3 (plekhm3) from Xenopus laevis (African clawed frog).